The primary structure comprises 248 residues: MIEYRIEEAVAKYREFYEFKPVRESAGIEDVRSAIEHTNLKPFATPDDIKKLCLEARENRFHGVCVNPCYVKLAREELEGTDVKVVTVVGFPLGANETRTKAHEAIFAVESGADEIDMVINVGMLKAKEWEYVYEDIRSVVESVKGKVVKVIIETCYLDTEEKIAACVISKLAGAHFVKTSTGFGTGGATAEDVHLMKWIVGDEMGVKASGGIRTFEDAVKMIMYGADRIGTSSGVKIVQGGEERYGG.

The active-site Proton donor/acceptor is the Asp117. Catalysis depends on Lys179, which acts as the Schiff-base intermediate with acetaldehyde. Lys208 serves as the catalytic Proton donor/acceptor.

This sequence belongs to the DeoC/FbaB aldolase family. DeoC type 1 subfamily.

It localises to the cytoplasm. The enzyme catalyses 2-deoxy-D-ribose 5-phosphate = D-glyceraldehyde 3-phosphate + acetaldehyde. The protein operates within carbohydrate degradation; 2-deoxy-D-ribose 1-phosphate degradation; D-glyceraldehyde 3-phosphate and acetaldehyde from 2-deoxy-alpha-D-ribose 1-phosphate: step 2/2. In terms of biological role, catalyzes a reversible aldol reaction between acetaldehyde and D-glyceraldehyde 3-phosphate to generate 2-deoxy-D-ribose 5-phosphate. This chain is Deoxyribose-phosphate aldolase, found in Thermotoga sp. (strain RQ2).